A 65-amino-acid polypeptide reads, in one-letter code: Large ribosomal subunit protein bL32 (65 aa).

It belongs to the bacterial ribosomal protein bL32 family.

This is Large ribosomal subunit protein bL32 from Tropheryma whipplei (strain TW08/27) (Whipple's bacillus).